A 59-amino-acid polypeptide reads, in one-letter code: Putative zinc finger protein ORF59a (59 aa).

The C2H2-type; degenerate zinc-finger motif lies at 11 to 33 (YQCLRCGLTFRTKKQLIRHLVNT).

In Acidianus hospitalis (AFV-1), this protein is Putative zinc finger protein ORF59a.